A 372-amino-acid chain; its full sequence is PqqA peptide cyclase (372 aa).

A Radical SAM core domain is found at 4-219; sequence APPPLSVLLE…VDTARRELGD (216 aa). 3 residues coordinate [4Fe-4S] cluster: cysteine 18, cysteine 22, and cysteine 25. Positions 342–372 are disordered; sequence ATAEREAAAPAPEFIYRRPERPAPATADTLE.

The protein belongs to the radical SAM superfamily. PqqE family. As to quaternary structure, interacts with PqqD. The interaction is necessary for activity of PqqE. The cofactor is [4Fe-4S] cluster.

It catalyses the reaction [PQQ precursor protein] + S-adenosyl-L-methionine = E-Y cross-linked-[PQQ precursor protein] + 5'-deoxyadenosine + L-methionine + H(+). It functions in the pathway cofactor biosynthesis; pyrroloquinoline quinone biosynthesis. Functionally, catalyzes the cross-linking of a glutamate residue and a tyrosine residue in the PqqA protein as part of the biosynthesis of pyrroloquinoline quinone (PQQ). The polypeptide is PqqA peptide cyclase (Xanthomonas oryzae pv. oryzae (strain MAFF 311018)).